Consider the following 377-residue polypeptide: Serine/threonine-protein phosphatase PP2A-2 catalytic subunit (377 aa).

Residues 1-66 (MDMEIDDPMH…SGIADHKSSK (66 aa)) form a disordered region. The span at 28–40 (DDGKNNTKARSND) shows a compositional bias: basic and acidic residues. The residue at position 38 (Ser-38) is a Phosphoserine. At Thr-43 the chain carries Phosphothreonine. Residues Asp-125, His-127, Asp-153, and Asn-185 each coordinate Mn(2+). His-186 acts as the Proton donor in catalysis. Residues His-235 and His-309 each coordinate Mn(2+). Leu-377 carries the leucine methyl ester modification.

This sequence belongs to the PPP phosphatase family. PP-2A subfamily. In terms of assembly, inactivated in a complex with phosphatase methylesterase PPE1 (PP2Ai). Interacts with phosphatase 2A activator RRD2, which can reactivate PP2Ai by dissociating the catalytic subunit from the complex. Interacts with TAP42. It depends on Mn(2+) as a cofactor. In terms of processing, reversibly methyl esterified on Leu-377 by leucine carboxyl methyltransferase 1 (PPM1) and protein phosphatase methylesterase 1 (PPE1). Carboxyl methylation influences the affinity of the catalytic subunit for the different regulatory subunits, thereby modulating the PP2A holoenzyme's substrate specificity, enzyme activity and cellular localization.

It carries out the reaction O-phospho-L-seryl-[protein] + H2O = L-seryl-[protein] + phosphate. The catalysed reaction is O-phospho-L-threonyl-[protein] + H2O = L-threonyl-[protein] + phosphate. Its function is as follows. Exact function not known, phosphatase 2A performs an essential cellular function. This is Serine/threonine-protein phosphatase PP2A-2 catalytic subunit (PPH22) from Saccharomyces cerevisiae (strain ATCC 204508 / S288c) (Baker's yeast).